A 43-amino-acid chain; its full sequence is Hemolysin H3C (43 aa).

Met-1 carries the N-formylmethionine modification.

Belongs to the staphylococcal hemolytic protein family.

It localises to the secreted. In terms of biological role, virulence factor. Causes hemolysis of erythrocytes from sheep (HD(50)=2.63 mM), rabbit (HD(50)=2.37 mM), guinea pig (HD(50)=1.98 mM), dog (HD(50)=1.02 mM) and human (HD(50)=2.07 mM). Acts synergistically with beta-hemolysins from S.aureus ATCC 25923. Cytotoxic towards human dermal fibroblasts. This is Hemolysin H3C from Staphylococcus cohnii subsp. cohnii.